The following is a 470-amino-acid chain: Histidine--tRNA ligase (470 aa).

Residues 69–99 (GIDPILPPNRQAEKDKSGETGKDKSGETGSE) are disordered. Positions 79–94 (QAEKDKSGETGKDKSG) are enriched in basic and acidic residues.

Belongs to the class-II aminoacyl-tRNA synthetase family. In terms of assembly, homodimer.

The protein localises to the cytoplasm. The enzyme catalyses tRNA(His) + L-histidine + ATP = L-histidyl-tRNA(His) + AMP + diphosphate + H(+). This is Histidine--tRNA ligase from Nostoc punctiforme (strain ATCC 29133 / PCC 73102).